The primary structure comprises 331 residues: MAKMYYDQDADAEVLKGKKIAVIGFGSQGHAHALNLRDSGFDVVVGLYEGSKSKERAEKEGLTVLTVEEAAKVADVIMMLIPDEKQAKVYKESIEKNLTEGKALAFAHGFNIHFKQIVPPENVDVFMVAPKGPGHLVRRMYQEGKGVPCLVAVHQNYTGKALDIALAYAKGIGGTKAGAIETTFKEETETDLFGEQAVLCGGLTELMKAGFETLVEAGYQPEIAYFECVNEMKLIVDLIYEGGFSYMRYSISDTAEFGDYMTGKRIITEETRKEMKKILEEIQTGKFAKEWLLENQVGRPQYNAIKEREANHPIEKVGKSLREMMPWLSKK.

Positions 2–182 (AKMYYDQDAD…GGTKAGAIET (181 aa)) constitute a KARI N-terminal Rossmann domain. NADP(+)-binding positions include 25–28 (FGSQ), Ser51, Ser53, and 83–86 (DEKQ). His108 is an active-site residue. Gly134 serves as a coordination point for NADP(+). A KARI C-terminal knotted domain is found at 183-328 (TFKEETETDL…KSLREMMPWL (146 aa)). 4 residues coordinate Mg(2+): Asp191, Glu195, Glu227, and Glu231. Position 252 (Ser252) interacts with substrate.

This sequence belongs to the ketol-acid reductoisomerase family. Requires Mg(2+) as cofactor.

The catalysed reaction is (2R)-2,3-dihydroxy-3-methylbutanoate + NADP(+) = (2S)-2-acetolactate + NADPH + H(+). The enzyme catalyses (2R,3R)-2,3-dihydroxy-3-methylpentanoate + NADP(+) = (S)-2-ethyl-2-hydroxy-3-oxobutanoate + NADPH + H(+). The protein operates within amino-acid biosynthesis; L-isoleucine biosynthesis; L-isoleucine from 2-oxobutanoate: step 2/4. It functions in the pathway amino-acid biosynthesis; L-valine biosynthesis; L-valine from pyruvate: step 2/4. Functionally, involved in the biosynthesis of branched-chain amino acids (BCAA). Catalyzes an alkyl-migration followed by a ketol-acid reduction of (S)-2-acetolactate (S2AL) to yield (R)-2,3-dihydroxy-isovalerate. In the isomerase reaction, S2AL is rearranged via a Mg-dependent methyl migration to produce 3-hydroxy-3-methyl-2-ketobutyrate (HMKB). In the reductase reaction, this 2-ketoacid undergoes a metal-dependent reduction by NADPH to yield (R)-2,3-dihydroxy-isovalerate. This is Ketol-acid reductoisomerase (NADP(+)) from Caldanaerobacter subterraneus subsp. tengcongensis (strain DSM 15242 / JCM 11007 / NBRC 100824 / MB4) (Thermoanaerobacter tengcongensis).